Here is a 639-residue protein sequence, read N- to C-terminus: Kinesin-like protein KIF22 (639 aa).

In terms of domain architecture, Kinesin motor spans 18-345; that stretch reads RVRVAVRLRP…LNFAAKSKQI (328 aa). 102–109 serves as a coordination point for ATP; that stretch reads GPTGAGKT. Positions 358–400 are disordered; that stretch reads IAALPAMKRPREEAETAAGSRQRKKSKTDSTESSPNTSMDAAS. Over residues 388-397 the composition is skewed to polar residues; that stretch reads TESSPNTSMD. A coiled-coil region spans residues 439-484; sequence KRERMALLKKWEESQMEIERLKEKQKELEQKAIEAEARLEKSTNSD. The Important for regulated proteolytic degradation signature appears at 549-552; that stretch reads GREN.

This sequence belongs to the TRAFAC class myosin-kinesin ATPase superfamily. Kinesin family. In terms of processing, ubiquitinated, leading to its subsequent proteasomal degradation.

The protein localises to the nucleus. Its subcellular location is the cytoplasm. It is found in the cytoskeleton. In terms of biological role, kinesin family member that is involved in spindle formation and the movements of chromosomes during mitosis and meiosis. Binds to microtubules and to DNA. The sequence is that of Kinesin-like protein KIF22 (kif22) from Xenopus tropicalis (Western clawed frog).